Consider the following 45-residue polypeptide: uncharacterized protein (45 aa).

An N-terminal signal peptide occupies residues 1-19 (MTFQILFLFVFHFVYIFRA).

This is an uncharacterized protein from Saccharomyces cerevisiae (strain ATCC 204508 / S288c) (Baker's yeast).